Consider the following 167-residue polypeptide: Cytochrome c-type biogenesis protein CcmE (167 aa).

Residues 1 to 7 (MTRKTRR) are Cytoplasmic-facing. The helical; Signal-anchor for type II membrane protein transmembrane segment at 8 to 28 (LWIVIACLACVGSAAALTLRA) threads the bilayer. The Periplasmic segment spans residues 29–167 (FSSNIVFFMA…DTMTAKKAGG (139 aa)). Heme is bound by residues His125 and Tyr129. Over residues 141-150 (TGKWDPRFGK) the composition is skewed to basic and acidic residues. The interval 141 to 167 (TGKWDPRFGKAPDASSWDTMTAKKAGG) is disordered.

It belongs to the CcmE/CycJ family.

The protein localises to the cell inner membrane. Functionally, heme chaperone required for the biogenesis of c-type cytochromes. Transiently binds heme delivered by CcmC and transfers the heme to apo-cytochromes in a process facilitated by CcmF and CcmH. The polypeptide is Cytochrome c-type biogenesis protein CcmE (Gluconobacter oxydans (strain 621H) (Gluconobacter suboxydans)).